The chain runs to 602 residues: Potassium-transporting ATPase potassium-binding subunit (602 aa).

A run of 10 helical transmembrane segments spans residues 3-23 (ANNL…AVPV), 64-84 (QYAL…YALL), 135-155 (GLTV…LALI), 178-198 (LYVL…QGVI), 282-302 (FSNF…CLVF), 313-333 (VAVL…ETSA), 418-438 (GLYG…LMIG), 456-476 (VSIV…IAVL), 522-542 (WMTA…VLAI), and 565-585 (LFVV…YMPA).

This sequence belongs to the KdpA family. As to quaternary structure, the system is composed of three essential subunits: KdpA, KdpB and KdpC.

The protein localises to the cell inner membrane. Its function is as follows. Part of the high-affinity ATP-driven potassium transport (or Kdp) system, which catalyzes the hydrolysis of ATP coupled with the electrogenic transport of potassium into the cytoplasm. This subunit binds the periplasmic potassium ions and delivers the ions to the membrane domain of KdpB through an intramembrane tunnel. In Burkholderia pseudomallei (strain K96243), this protein is Potassium-transporting ATPase potassium-binding subunit.